Here is a 357-residue protein sequence, read N- to C-terminus: Protein FAM118A (357 aa).

N-acetylmethionine is present on methionine 1. A helical membrane pass occupies residues 30-50 (LLLVIGTGVSAAVAPGIPALC). Serine 311 is modified (phosphoserine).

This sequence belongs to the FAM118 family.

The protein localises to the membrane. The sequence is that of Protein FAM118A (FAM118A) from Homo sapiens (Human).